The chain runs to 450 residues: Zinc finger protein 277 (450 aa).

N-acetylalanine is present on alanine 2. C2H2-type zinc fingers lie at residues 224–248 and 355–381; these read LQCL…KKQH and HQCR…ETKH.

Belongs to the ZNF277 family. Interacts (via zinc-finger domains) with RPS2/40S ribosomal protein S2, perhaps as nascent RPS2 is synthesized during translation; the interaction is direct; the interaction is extra-ribosomal. Interaction with RPS2 competes with the binding of RPS2 to protein arginine methyltransferase PRMT3. Interacts with Polycomb group (PcG) complex protein BMI1. May be part of a complex including at least ZNF277, BMI1 and RNF2/RING2.

It is found in the nucleus. Functionally, probable transcription factor. Involved in modulation of cellular senescence; represses transcription of the tumor suppressor gene INK4A/ARF, perhaps acting via the Polycomb group (PcG) complex PRC1. The polypeptide is Zinc finger protein 277 (ZNF277) (Homo sapiens (Human)).